A 323-amino-acid polypeptide reads, in one-letter code: Serine/threonine-protein phosphatase PP1 (323 aa).

Mn(2+) contacts are provided by D63, H65, D91, and N123. The active-site Proton donor is the H124. Residues H172 and H247 each contribute to the Mn(2+) site.

It belongs to the PPP phosphatase family. PP-1 subfamily. Mn(2+) serves as cofactor.

It catalyses the reaction O-phospho-L-seryl-[protein] + H2O = L-seryl-[protein] + phosphate. The catalysed reaction is O-phospho-L-threonyl-[protein] + H2O = L-threonyl-[protein] + phosphate. Plays an important role in the control of mitosis by reversing the action of the nimA kinase. In Emericella nidulans (strain FGSC A4 / ATCC 38163 / CBS 112.46 / NRRL 194 / M139) (Aspergillus nidulans), this protein is Serine/threonine-protein phosphatase PP1 (bimG).